The chain runs to 301 residues: Probable enoyl-CoA hydratase 2, mitochondrial (301 aa).

The N-terminal 32 residues, 1–32 (MSFVKYLRRDNLLQLAGKPSLSRNYILQTCRT), are a transit peptide targeting the mitochondrion. Substrate is bound by residues 105 to 109 (AGADL) and G152.

Belongs to the enoyl-CoA hydratase/isomerase family.

It is found in the mitochondrion. The catalysed reaction is a (3S)-3-hydroxyacyl-CoA = a (2E)-enoyl-CoA + H2O. It catalyses the reaction a 4-saturated-(3S)-3-hydroxyacyl-CoA = a (3E)-enoyl-CoA + H2O. It functions in the pathway lipid metabolism; fatty acid beta-oxidation. Its function is as follows. Straight-chain enoyl-CoA thioesters from C4 up to at least C16 are processed, although with decreasing catalytic rate. The sequence is that of Probable enoyl-CoA hydratase 2, mitochondrial from Arabidopsis thaliana (Mouse-ear cress).